Consider the following 486-residue polypeptide: Cysteine--tRNA ligase (486 aa).

C30 serves as a coordination point for Zn(2+). Residues P32–N42 carry the 'HIGH' region motif. Zn(2+) is bound by residues C221, H246, and E250. A 'KMSKS' region motif is present at residues K279–S283. K282 contributes to the ATP binding site.

The protein belongs to the class-I aminoacyl-tRNA synthetase family. Monomer. The cofactor is Zn(2+).

It is found in the cytoplasm. It catalyses the reaction tRNA(Cys) + L-cysteine + ATP = L-cysteinyl-tRNA(Cys) + AMP + diphosphate. In Cereibacter sphaeroides (strain ATCC 17029 / ATH 2.4.9) (Rhodobacter sphaeroides), this protein is Cysteine--tRNA ligase.